A 185-amino-acid chain; its full sequence is Segregation and condensation protein B (185 aa).

It belongs to the ScpB family. As to quaternary structure, homodimer. Homodimerization may be required to stabilize the binding of ScpA to the Smc head domains. Component of a cohesin-like complex composed of ScpA, ScpB and the Smc homodimer, in which ScpA and ScpB bind to the head domain of Smc. The presence of the three proteins is required for the association of the complex with DNA.

Its subcellular location is the cytoplasm. In terms of biological role, participates in chromosomal partition during cell division. May act via the formation of a condensin-like complex containing Smc and ScpA that pull DNA away from mid-cell into both cell halves. The sequence is that of Segregation and condensation protein B from Alkaliphilus oremlandii (strain OhILAs) (Clostridium oremlandii (strain OhILAs)).